The primary structure comprises 169 residues: Ribosome maturation factor RimM (169 aa).

The PRC barrel domain maps to N97–Y169.

Belongs to the RimM family. As to quaternary structure, binds ribosomal protein uS19.

It localises to the cytoplasm. In terms of biological role, an accessory protein needed during the final step in the assembly of 30S ribosomal subunit, possibly for assembly of the head region. Essential for efficient processing of 16S rRNA. May be needed both before and after RbfA during the maturation of 16S rRNA. It has affinity for free ribosomal 30S subunits but not for 70S ribosomes. The protein is Ribosome maturation factor RimM of Francisella philomiragia subsp. philomiragia (strain ATCC 25017 / CCUG 19701 / FSC 153 / O#319-036).